The chain runs to 226 residues: 3-dehydroquinate dehydratase (226 aa).

3-dehydroquinate contacts are provided by residues 29–31 (EFR) and Arg56. Residue His120 is the Proton donor/acceptor of the active site. The active-site Schiff-base intermediate with substrate is Lys146. Residues Arg187, Thr208, and Gln212 each coordinate 3-dehydroquinate.

Belongs to the type-I 3-dehydroquinase family. As to quaternary structure, homodimer.

It carries out the reaction 3-dehydroquinate = 3-dehydroshikimate + H2O. It functions in the pathway metabolic intermediate biosynthesis; chorismate biosynthesis; chorismate from D-erythrose 4-phosphate and phosphoenolpyruvate: step 3/7. Involved in the third step of the chorismate pathway, which leads to the biosynthesis of aromatic amino acids. Catalyzes the cis-dehydration of 3-dehydroquinate (DHQ) and introduces the first double bond of the aromatic ring to yield 3-dehydroshikimate. The protein is 3-dehydroquinate dehydratase of Halobacterium salinarum (strain ATCC 700922 / JCM 11081 / NRC-1) (Halobacterium halobium).